Consider the following 225-residue polypeptide: THAP domain-containing protein 1 B (225 aa).

The THAP-type zinc-finger motif lies at 5–57 (CSAYGCKNRYDKDRPISFHKFPLKRPLLCKKWEAAVRRADFKPTKYSSICSDH). The stretch at 139–194 (VEDTVHQRRRIQQLEEQVDKLRKKLKIANQKCRRQERSLEKLEKEVSEYREAKGSG) forms a coiled coil.

It belongs to the THAP1 family.

It localises to the nucleus. Its subcellular location is the nucleoplasm. Its function is as follows. DNA-binding transcription regulator that regulates endothelial cell proliferation and G1/S cell-cycle progression. Specifically binds the 5'-[AT]NTNN[GT]GGCA[AGT]-3' core DNA sequence and acts by modulating expression of pRB-E2F cell-cycle target genes. The polypeptide is THAP domain-containing protein 1 B (thap1-b) (Xenopus laevis (African clawed frog)).